A 237-amino-acid polypeptide reads, in one-letter code: Ribonuclease PH (237 aa).

Phosphate-binding positions include Arg86 and 124 to 126; that span reads GTR.

It belongs to the RNase PH family. In terms of assembly, homohexameric ring arranged as a trimer of dimers.

The catalysed reaction is tRNA(n+1) + phosphate = tRNA(n) + a ribonucleoside 5'-diphosphate. In terms of biological role, phosphorolytic 3'-5' exoribonuclease that plays an important role in tRNA 3'-end maturation. Removes nucleotide residues following the 3'-CCA terminus of tRNAs; can also add nucleotides to the ends of RNA molecules by using nucleoside diphosphates as substrates, but this may not be physiologically important. Probably plays a role in initiation of 16S rRNA degradation (leading to ribosome degradation) during starvation. This is Ribonuclease PH from Tolumonas auensis (strain DSM 9187 / NBRC 110442 / TA 4).